The primary structure comprises 167 residues: NAD(P)H-quinone oxidoreductase subunit I, chloroplastic (167 aa).

4Fe-4S ferredoxin-type domains are found at residues 55-84 and 95-124; these read GRIH…VDWK and LNYS…MTEE. [4Fe-4S] cluster-binding residues include Cys-64, Cys-67, Cys-70, Cys-74, Cys-104, Cys-107, Cys-110, and Cys-114.

The protein belongs to the complex I 23 kDa subunit family. NDH is composed of at least 16 different subunits, 5 of which are encoded in the nucleus. [4Fe-4S] cluster serves as cofactor.

It localises to the plastid. The protein localises to the chloroplast thylakoid membrane. It carries out the reaction a plastoquinone + NADH + (n+1) H(+)(in) = a plastoquinol + NAD(+) + n H(+)(out). The enzyme catalyses a plastoquinone + NADPH + (n+1) H(+)(in) = a plastoquinol + NADP(+) + n H(+)(out). In terms of biological role, NDH shuttles electrons from NAD(P)H:plastoquinone, via FMN and iron-sulfur (Fe-S) centers, to quinones in the photosynthetic chain and possibly in a chloroplast respiratory chain. The immediate electron acceptor for the enzyme in this species is believed to be plastoquinone. Couples the redox reaction to proton translocation, and thus conserves the redox energy in a proton gradient. The polypeptide is NAD(P)H-quinone oxidoreductase subunit I, chloroplastic (Vitis vinifera (Grape)).